A 355-amino-acid chain; its full sequence is UDP-N-acetylglucosamine--N-acetylmuramyl-(pentapeptide) pyrophosphoryl-undecaprenol N-acetylglucosamine transferase (355 aa).

UDP-N-acetyl-alpha-D-glucosamine-binding positions include 15–17, Asn127, Arg163, Ser191, Ile244, 263–268, and Gln288; these read TGG and ALTVSE.

This sequence belongs to the glycosyltransferase 28 family. MurG subfamily.

The protein localises to the cell inner membrane. It carries out the reaction di-trans,octa-cis-undecaprenyl diphospho-N-acetyl-alpha-D-muramoyl-L-alanyl-D-glutamyl-meso-2,6-diaminopimeloyl-D-alanyl-D-alanine + UDP-N-acetyl-alpha-D-glucosamine = di-trans,octa-cis-undecaprenyl diphospho-[N-acetyl-alpha-D-glucosaminyl-(1-&gt;4)]-N-acetyl-alpha-D-muramoyl-L-alanyl-D-glutamyl-meso-2,6-diaminopimeloyl-D-alanyl-D-alanine + UDP + H(+). It functions in the pathway cell wall biogenesis; peptidoglycan biosynthesis. Functionally, cell wall formation. Catalyzes the transfer of a GlcNAc subunit on undecaprenyl-pyrophosphoryl-MurNAc-pentapeptide (lipid intermediate I) to form undecaprenyl-pyrophosphoryl-MurNAc-(pentapeptide)GlcNAc (lipid intermediate II). The polypeptide is UDP-N-acetylglucosamine--N-acetylmuramyl-(pentapeptide) pyrophosphoryl-undecaprenol N-acetylglucosamine transferase (Cronobacter sakazakii (strain ATCC BAA-894) (Enterobacter sakazakii)).